A 781-amino-acid chain; its full sequence is Isoquinoline 1-oxidoreductase subunit beta (781 aa).

As to quaternary structure, heterodimer of an alpha chain and a beta chain.

The catalysed reaction is isoquinoline + A + H2O = isoquinolin-1(2H)-one + AH2. Specific towards N-containing N-heterocyclic substrates, including isoquinoline, isoquinolin-5-ol, phthalazine and quinazoline. The chain is Isoquinoline 1-oxidoreductase subunit beta (iorB) from Brevundimonas diminuta (Pseudomonas diminuta).